The chain runs to 459 residues: uncharacterized protein (459 aa).

The region spanning 9-67 (KLEVGQTFPVTIKRLGINGEGVGYFKRQVVFIPGALPGEEVVAETTKIQRGFAEAKVKK) is the TRAM domain. Residues cysteine 80, cysteine 86, cysteine 89, and cysteine 168 each contribute to the [4Fe-4S] cluster site. S-adenosyl-L-methionine contacts are provided by glutamine 292, tyrosine 321, aspartate 342, and aspartate 390. Cysteine 417 serves as the catalytic Nucleophile.

It belongs to the class I-like SAM-binding methyltransferase superfamily. RNA M5U methyltransferase family.

This is an uncharacterized protein from Bacillus cereus (strain ATCC 10987 / NRS 248).